The primary structure comprises 321 residues: CRISPR system ring nuclease SSO1393 (321 aa).

This sequence belongs to the cOA ring nuclease family. Homodimer. Does not require a metal cofactor. is required as a cofactor.

It is found in the cytoplasm. The enzyme catalyses cyclic tetraadenylate = 2 5'-hydroxy-diadenylate 2',3'-cylic phosphate. CRISPR (clustered regularly interspaced short palindromic repeat) is an adaptive immune system that provides protection against mobile genetic elements (viruses, transposable elements and conjugative plasmids). CRISPR clusters contain spacers, sequences complementary to antecedent mobile elements, and target invading nucleic acids. CRISPR clusters are transcribed and processed into CRISPR RNA (crRNA). A nuclease that degrades cyclic oligoadenylates (cOA), second messengers that induce an antiviral state important for defense against invading nucleic acids. Destruction of cOA deactivates the Csx1 ribonuclease, preventing uncontrolled degradation of cellular RNA. Slowly degrades cA4 (a tetraadenylate ring) into first a linear tetraadenylate product and secondly into a linear diadenylate product with 5'-OH and 2',3'-cyclic phosphate termini. Is 10-fold less active than SSO2081, suggesting it plays a minor role in cA4 degradation. There may be 2 active sites per homodimer. The sequence is that of CRISPR system ring nuclease SSO1393 from Saccharolobus solfataricus (strain ATCC 35092 / DSM 1617 / JCM 11322 / P2) (Sulfolobus solfataricus).